A 149-amino-acid chain; its full sequence is Deoxyuridine 5'-triphosphate nucleotidohydrolase (149 aa).

Residues 68 to 70 (RSG), Asn81, and 85 to 87 (LID) contribute to the substrate site.

The protein belongs to the dUTPase family. It depends on Mg(2+) as a cofactor.

It catalyses the reaction dUTP + H2O = dUMP + diphosphate + H(+). The protein operates within pyrimidine metabolism; dUMP biosynthesis; dUMP from dCTP (dUTP route): step 2/2. In terms of biological role, this enzyme is involved in nucleotide metabolism: it produces dUMP, the immediate precursor of thymidine nucleotides and it decreases the intracellular concentration of dUTP so that uracil cannot be incorporated into DNA. The protein is Deoxyuridine 5'-triphosphate nucleotidohydrolase of Nitrosospira multiformis (strain ATCC 25196 / NCIMB 11849 / C 71).